We begin with the raw amino-acid sequence, 324 residues long: Phthalate 4,5-dioxygenase oxygenase reductase subunit (324 aa).

The 103-residue stretch at 9–111 folds into the FAD-binding FR-type domain; that stretch reads DGFTGLKVIA…ATPQNEFELI (103 aa). Residue 115–229 coordinates NAD(+); the sequence is RQFIFVAGGI…PGSIHFESFG (115 aa). Positions 241–324 constitute a 2Fe-2S ferredoxin-type domain; the sequence is FSVTLGRSGI…ARNDVLVLDL (84 aa). [2Fe-2S] cluster is bound by residues C275, C280, C283, and C311.

The protein belongs to the PDR/VanB family. In terms of assembly, this dioxygenase system consists of two proteins: phthalate oxygenase and phthalate oxygenase reductase. FMN is required as a cofactor.

It catalyses the reaction phthalate + NADH + O2 + H(+) = cis-4,5-dihydroxycyclohexa-2,6-diene-1,2-dicarboxylate + NAD(+). It participates in xenobiotic degradation; phthalate degradation; 3,4-dihydroxybenzoate from phthalate: step 1/3. This is Phthalate 4,5-dioxygenase oxygenase reductase subunit (pht2) from Pseudomonas putida (Arthrobacter siderocapsulatus).